A 179-amino-acid polypeptide reads, in one-letter code: Dual-action ribosomal maturation protein DarP (179 aa).

Belongs to the DarP family.

It is found in the cytoplasm. Functionally, member of a network of 50S ribosomal subunit biogenesis factors which assembles along the 30S-50S interface, preventing incorrect 23S rRNA structures from forming. Promotes peptidyl transferase center (PTC) maturation. This chain is Dual-action ribosomal maturation protein DarP, found in Photorhabdus laumondii subsp. laumondii (strain DSM 15139 / CIP 105565 / TT01) (Photorhabdus luminescens subsp. laumondii).